The following is a 389-amino-acid chain: Na(+)/H(+) antiporter NhaA 1 (389 aa).

The next 11 helical transmembrane spans lie at Val12–Val32, Phe62–Leu82, Ile97–Leu117, Gly128–Gly148, Ile157–Phe177, Ile184–Gly204, Ile220–Ile240, Phe260–Ser280, Ile282–Gly302, Leu331–Leu351, and Leu365–Phe385.

The protein belongs to the NhaA Na(+)/H(+) (TC 2.A.33) antiporter family.

It is found in the cell inner membrane. It catalyses the reaction Na(+)(in) + 2 H(+)(out) = Na(+)(out) + 2 H(+)(in). Functionally, na(+)/H(+) antiporter that extrudes sodium in exchange for external protons. The polypeptide is Na(+)/H(+) antiporter NhaA 1 (Campylobacter jejuni subsp. jejuni serotype O:2 (strain ATCC 700819 / NCTC 11168)).